A 274-amino-acid chain; its full sequence is Ribonucleoside-diphosphate reductase small chain (274 aa).

Asp70, Glu101, and His104 together coordinate Fe cation. Tyr108 is an active-site residue. Glu163, Glu197, and His200 together coordinate Fe cation.

This sequence belongs to the ribonucleoside diphosphate reductase small chain family. As to quaternary structure, heterodimer of a large and a small chain. The cofactor is Fe cation.

The enzyme catalyses a 2'-deoxyribonucleoside 5'-diphosphate + [thioredoxin]-disulfide + H2O = a ribonucleoside 5'-diphosphate + [thioredoxin]-dithiol. Functionally, ribonucleoside-diphosphate reductase holoenzyme provides the precursors necessary for viral DNA synthesis. Allows virus growth in non-dividing cells. Catalyzes the biosynthesis of deoxyribonucleotides from the corresponding ribonucleotides. The polypeptide is Ribonucleoside-diphosphate reductase small chain (Sus scrofa (Pig)).